A 619-amino-acid chain; its full sequence is Eukaryotic translation initiation factor 2-alpha kinase 1 (619 aa).

The segment at 1-40 (MLGGSSVDGERDTDDDAAGAVAAPPAIDFPAEVSDPKYDE) is disordered. Residues 18 to 28 (AGAVAAPPAID) are compositionally biased toward low complexity. Positions 85-104 (LHSKQVFKLLCQTFIKMGLL) match the SIFI-degron motif. Residues 167 to 580 (FEELAILGKG…ALQLLQSELF (414 aa)) enclose the Protein kinase domain. Residues 173–181 (LGKGGYGRV) and Lys196 each bind ATP. A Phosphothreonine modification is found at Thr283. The stretch at 408-413 (ACPYVM) is one HRM 1 repeat. Asp440 functions as the Proton acceptor in the catalytic mechanism. Phosphothreonine; by autocatalysis occurs at positions 483, 485, and 490. An HRM 2 repeat occupies 549–554 (RCPVQA).

This sequence belongs to the protein kinase superfamily. Ser/Thr protein kinase family. GCN2 subfamily. In terms of assembly, synthesized in an inactive form that binds to the N-terminal domain of CDC37. Has to be associated with a multiprotein complex containing Hsp90, CDC37 and PPP5C for maturation and activation by autophosphorylation. The phosphatase PPP5C modulates this activation. Homodimer; homodimerizes in presence of heme, forming a disulfide-linked inactive homodimer. Interacts with DELE1; binds both to full-length DELE1 and processed form of DELE1 (S-DELE1) in response to stress, leading to activate its protein kinase activity and trigger the integrated stress response (ISR). Activated by autophosphorylation; phosphorylated predominantly on serine and threonine residues, but also on tyrosine residues. Autophosphorylation at Thr-485 is required for kinase activation. The active autophosphorylated form apparently is largely refractory to cellular heme fluctuations. In terms of processing, ubiquitinated and degraded by the SIFI complex once the mitochondrial stress has been resolved, thereby providing stress response silencing. Within the SIFI complex, UBR4 initiates ubiquitin chain that are further elongated or branched by KCMF1. In terms of tissue distribution, expressed predominantly in erythroid cells, mature reticulocytes, as well as fetal liver nucleated erythroid cells. At much lower levels, expressed in hepatocytes and bone marrow-derived macrophages (at protein level).

It is found in the cytoplasm. The catalysed reaction is L-seryl-[protein] + ATP = O-phospho-L-seryl-[protein] + ADP + H(+). It catalyses the reaction L-threonyl-[protein] + ATP = O-phospho-L-threonyl-[protein] + ADP + H(+). Its activity is regulated as follows. In normal conditions, the protein kinase activity is inhibited; inhibition is relieved by various stress conditions. Inhibited by heme: in presence of heme, forms a disulfide-linked inactive homodimer. Heme depletion relieves inhibition and stimulates kinase activity by autophosphorylation. Inhibited by the heme metabolites biliverdin and bilirubin. Induced by oxidative stress generated by arsenite treatment. Binding of nitric oxide (NO) to the heme iron in the N-terminal heme-binding domain activates the kinase activity, while binding of carbon monoxide (CO) suppresses kinase activity. Protein kinase activity is also activated upon binding to DELE1 in response to various stress, triggering the integrated stress response (ISR): activated by full-length DELE1 in response to iron deficiency, while it is activated by the processed form of DELE1 (S-DELE1) in response to mitochondrial stress. Metabolic-stress sensing protein kinase that phosphorylates the alpha subunit of eukaryotic translation initiation factor 2 (EIF2S1/eIF-2-alpha) in response to various stress conditions. Key activator of the integrated stress response (ISR) required for adaptation to various stress, such as heme deficiency, oxidative stress, osmotic shock, mitochondrial dysfunction and heat shock. EIF2S1/eIF-2-alpha phosphorylation in response to stress converts EIF2S1/eIF-2-alpha in a global protein synthesis inhibitor, leading to a global attenuation of cap-dependent translation, while concomitantly initiating the preferential translation of ISR-specific mRNAs, such as the transcriptional activator ATF4, and hence allowing ATF4-mediated reprogramming. Acts as a key sensor of heme-deficiency: in normal conditions, binds hemin via a cysteine thiolate and histidine nitrogenous coordination, leading to inhibit the protein kinase activity. This binding occurs with moderate affinity, allowing it to sense the heme concentration within the cell: heme depletion relieves inhibition and stimulates kinase activity, activating the ISR. Thanks to this unique heme-sensing capacity, plays a crucial role to shut off protein synthesis during acute heme-deficient conditions. In red blood cells (RBCs), controls hemoglobin synthesis ensuring a coordinated regulation of the synthesis of its heme and globin moieties. It thereby plays an essential protective role for RBC survival in anemias of iron deficiency. Iron deficiency also triggers activation by full-length DELE1. Also activates the ISR in response to mitochondrial dysfunction: HRI/EIF2AK1 protein kinase activity is activated upon binding to the processed form of DELE1 (S-DELE1), thereby promoting the ATF4-mediated reprogramming. Also acts as an activator of mitophagy in response to mitochondrial damage: catalyzes phosphorylation of eIF-2-alpha (EIF2S1) following activation by S-DELE1, thereby promoting mitochondrial localization of EIF2S1, triggering PRKN-independent mitophagy. The sequence is that of Eukaryotic translation initiation factor 2-alpha kinase 1 from Mus musculus (Mouse).